A 405-amino-acid polypeptide reads, in one-letter code: L-carnitine CoA-transferase (405 aa).

Residues Lys97 and Arg104 each contribute to the CoA site. Asp169 serves as the catalytic Nucleophile.

It belongs to the CoA-transferase III family. CaiB subfamily. In terms of assembly, homodimer.

The protein localises to the cytoplasm. It carries out the reaction crotonobetainyl-CoA + (R)-carnitine = crotonobetaine + (R)-carnitinyl-CoA. It catalyses the reaction 4-(trimethylamino)butanoyl-CoA + (R)-carnitine = (R)-carnitinyl-CoA + 4-(trimethylamino)butanoate. Its pathway is amine and polyamine metabolism; carnitine metabolism. Functionally, catalyzes the reversible transfer of the CoA moiety from gamma-butyrobetainyl-CoA to L-carnitine to generate L-carnitinyl-CoA and gamma-butyrobetaine. Is also able to catalyze the reversible transfer of the CoA moiety from gamma-butyrobetainyl-CoA or L-carnitinyl-CoA to crotonobetaine to generate crotonobetainyl-CoA. This chain is L-carnitine CoA-transferase, found in Escherichia coli O127:H6 (strain E2348/69 / EPEC).